Consider the following 149-residue polypeptide: Deoxyuridine 5'-triphosphate nucleotidohydrolase (149 aa).

Residues 68 to 70, N81, 85 to 87, and M95 contribute to the substrate site; these read RSG and LID.

It belongs to the dUTPase family. Mg(2+) is required as a cofactor.

The enzyme catalyses dUTP + H2O = dUMP + diphosphate + H(+). It functions in the pathway pyrimidine metabolism; dUMP biosynthesis; dUMP from dCTP (dUTP route): step 2/2. In terms of biological role, this enzyme is involved in nucleotide metabolism: it produces dUMP, the immediate precursor of thymidine nucleotides and it decreases the intracellular concentration of dUTP so that uracil cannot be incorporated into DNA. The chain is Deoxyuridine 5'-triphosphate nucleotidohydrolase from Polynucleobacter necessarius subsp. necessarius (strain STIR1).